A 247-amino-acid chain; its full sequence is Protein NipSnap homolog 3A (247 aa).

Residues Lys-48 and Lys-166 each carry the N6-acetyllysine modification.

Belongs to the NipSnap family. As to quaternary structure, interacts with the Salmonella typhimurium virulence protein spiC. In terms of tissue distribution, ubiquitous. Highly expressed in liver, kidney and muscle. Expressed at intermediate level in brain, heart, colon, thymus, kidney, small intestine, placenta, lung, leukocytes and spleen.

It localises to the cytoplasm. Its subcellular location is the cytosol. This Homo sapiens (Human) protein is Protein NipSnap homolog 3A (NIPSNAP3A).